The sequence spans 75 residues: Small ribosomal subunit protein bS18 (75 aa).

Belongs to the bacterial ribosomal protein bS18 family. As to quaternary structure, part of the 30S ribosomal subunit. Forms a tight heterodimer with protein bS6.

In terms of biological role, binds as a heterodimer with protein bS6 to the central domain of the 16S rRNA, where it helps stabilize the platform of the 30S subunit. The protein is Small ribosomal subunit protein bS18 of Paracoccus denitrificans (strain Pd 1222).